The sequence spans 56 residues: Large ribosomal subunit protein eL37 (56 aa).

4 residues coordinate Zn(2+): Cys19, Cys22, Cys34, and Cys37. Residues 19–37 form a C4-type zinc finger; sequence CRRCGRLSYNFNRKTCVAC.

Belongs to the eukaryotic ribosomal protein eL37 family. It depends on Zn(2+) as a cofactor.

Its function is as follows. Binds to the 23S rRNA. The polypeptide is Large ribosomal subunit protein eL37 (Methanothrix thermoacetophila (strain DSM 6194 / JCM 14653 / NBRC 101360 / PT) (Methanosaeta thermophila)).